Here is a 326-residue protein sequence, read N- to C-terminus: MLTLARQQQRQNIRWLLCLSVLMLLALLLSLCAGEQWISPGDWFSPRGELFVWQIRLPRTLAVLLVGAALAISGAVMQALFENPLAEPGLLGVSNGAGVGLIAAVLLGQGQLPNWALGLCAIAGALIITLILLRFARRHLSTSRLLLAGVALGIICSALMTWAIYFSTSVDLRQLMYWMMGGFGGVDWRQSWLMLALIPMLLWICCQSRPMNMLALGEISARQLGLPLWFWRNVLVAATGWMVGVSVALAGAIGFIGLVIPHILRLCGLTDHRALLPGCALAGASALLLADIVARLALAAAELPIGVVTATLGAPVFIWLLLKAGR.

Over 1 to 10 the chain is Cytoplasmic; it reads MLTLARQQQR. A helical transmembrane segment spans residues 11–35; it reads QNIRWLLCLSVLMLLALLLSLCAGE. At 36–56 the chain is on the periplasmic side; it reads QWISPGDWFSPRGELFVWQIR. The helical transmembrane segment at 57–81 threads the bilayer; sequence LPRTLAVLLVGAALAISGAVMQALF. Residues 82–92 lie on the Cytoplasmic side of the membrane; the sequence is ENPLAEPGLLG. Residues 93 to 107 traverse the membrane as a helical segment; that stretch reads VSNGAGVGLIAAVLL. Residues 108 to 113 lie on the Periplasmic side of the membrane; sequence GQGQLP. The helical transmembrane segment at 114–138 threads the bilayer; the sequence is NWALGLCAIAGALIITLILLRFARR. The Cytoplasmic portion of the chain corresponds to 139-141; the sequence is HLS. The helical transmembrane segment at 142-166 threads the bilayer; that stretch reads TSRLLLAGVALGIICSALMTWAIYF. Residues 167–190 are Periplasmic-facing; that stretch reads STSVDLRQLMYWMMGGFGGVDWRQ. Residues 191–206 traverse the membrane as a helical segment; sequence SWLMLALIPMLLWICC. The Cytoplasmic portion of the chain corresponds to 207–228; it reads QSRPMNMLALGEISARQLGLPL. The chain crosses the membrane as a helical span at residues 229 to 249; that stretch reads WFWRNVLVAATGWMVGVSVAL. The Periplasmic segment spans residues 250 to 257; that stretch reads AGAIGFIG. A helical membrane pass occupies residues 258–267; it reads LVIPHILRLC. Residues 268–274 are Cytoplasmic-facing; the sequence is GLTDHRA. The chain crosses the membrane as a helical span at residues 275–296; the sequence is LLPGCALAGASALLLADIVARL. Over 297-304 the chain is Periplasmic; sequence ALAAAELP. A helical membrane pass occupies residues 305-324; the sequence is IGVVTATLGAPVFIWLLLKA. At 325 to 326 the chain is on the cytoplasmic side; it reads GR.

It belongs to the binding-protein-dependent transport system permease family. FecCD subfamily. The complex is composed of two ATP-binding proteins (BtuD), two transmembrane proteins (BtuC) and a solute-binding protein (BtuF).

It localises to the cell inner membrane. Part of the ABC transporter complex BtuCDF involved in vitamin B12 import. Involved in the translocation of the substrate across the membrane. This chain is Vitamin B12 import system permease protein BtuC (btuC), found in Escherichia coli O157:H7.